Reading from the N-terminus, the 206-residue chain is Outer-membrane lipoprotein LolB (206 aa).

The N-terminal stretch at 1-18 (MSLLKNLLAPCLALLLAG) is a signal peptide. Residue Cys-19 is the site of N-palmitoyl cysteine attachment. Residue Cys-19 is the site of S-diacylglycerol cysteine attachment.

Belongs to the LolB family. In terms of assembly, monomer.

It localises to the cell outer membrane. Plays a critical role in the incorporation of lipoproteins in the outer membrane after they are released by the LolA protein. The polypeptide is Outer-membrane lipoprotein LolB (Stutzerimonas stutzeri (strain A1501) (Pseudomonas stutzeri)).